Reading from the N-terminus, the 149-residue chain is 3-hydroxyacyl-[acyl-carrier-protein] dehydratase FabZ (149 aa).

Histidine 48 is an active-site residue.

The protein belongs to the thioester dehydratase family. FabZ subfamily.

It localises to the cytoplasm. The enzyme catalyses a (3R)-hydroxyacyl-[ACP] = a (2E)-enoyl-[ACP] + H2O. Its function is as follows. Involved in unsaturated fatty acids biosynthesis. Catalyzes the dehydration of short chain beta-hydroxyacyl-ACPs and long chain saturated and unsaturated beta-hydroxyacyl-ACPs. In Thermomicrobium roseum (strain ATCC 27502 / DSM 5159 / P-2), this protein is 3-hydroxyacyl-[acyl-carrier-protein] dehydratase FabZ.